Consider the following 215-residue polypeptide: Cytochrome b6 (215 aa).

Residues 32 to 52 traverse the membrane as a helical segment; that stretch reads IFYCLGGITLTCFLVQVATGF. C35 is a binding site for heme c. Heme b is bound by residues H86 and H100. A run of 3 helical transmembrane segments spans residues 90–110, 116–136, and 186–206; these read ASMMVLMMILHVFRVYLTGGF, LTWVTGVILAVLTVSFGVTGY, and LHTFILPFLTAVFMLMHFLMI. Heme b is bound by residues H187 and H202.

Belongs to the cytochrome b family. PetB subfamily. The 4 large subunits of the cytochrome b6-f complex are cytochrome b6, subunit IV (17 kDa polypeptide, PetD), cytochrome f and the Rieske protein, while the 4 small subunits are PetG, PetL, PetM and PetN. The complex functions as a dimer. It depends on heme b as a cofactor. Heme c serves as cofactor.

The protein resides in the plastid. It localises to the chloroplast thylakoid membrane. Component of the cytochrome b6-f complex, which mediates electron transfer between photosystem II (PSII) and photosystem I (PSI), cyclic electron flow around PSI, and state transitions. This chain is Cytochrome b6, found in Welwitschia mirabilis (Tree tumbo).